An 80-amino-acid polypeptide reads, in one-letter code: Acyl carrier protein (80 aa).

Residues 2 to 77 form the Carrier domain; it reads SDTLKRLQKI…DALNYIENKI (76 aa). Ser37 bears the O-(pantetheine 4'-phosphoryl)serine mark.

The protein belongs to the acyl carrier protein (ACP) family. Post-translationally, 4'-phosphopantetheine is transferred from CoA to a specific serine of apo-ACP by AcpS. This modification is essential for activity because fatty acids are bound in thioester linkage to the sulfhydryl of the prosthetic group.

Its subcellular location is the plastid. The protein localises to the chloroplast. It functions in the pathway lipid metabolism; fatty acid biosynthesis. Its function is as follows. Carrier of the growing fatty acid chain in fatty acid biosynthesis. The polypeptide is Acyl carrier protein (Cylindrotheca sp. (strain N1) (Marine diatom)).